The sequence spans 130 residues: Small ribosomal subunit protein uS8 (130 aa).

The protein belongs to the universal ribosomal protein uS8 family. As to quaternary structure, part of the 30S ribosomal subunit. Contacts proteins S5 and S12.

Functionally, one of the primary rRNA binding proteins, it binds directly to 16S rRNA central domain where it helps coordinate assembly of the platform of the 30S subunit. The chain is Small ribosomal subunit protein uS8 from Opitutus terrae (strain DSM 11246 / JCM 15787 / PB90-1).